Consider the following 453-residue polypeptide: Probable glucan endo-1,3-beta-glucosidase eglC (453 aa).

Positions methionine 1–alanine 18 are cleaved as a signal peptide. The active-site Proton donor is the glutamate 128. Asparagine 183 is a glycosylation site (N-linked (GlcNAc...) asparagine). Glutamate 239 (nucleophile) is an active-site residue. 3 N-linked (GlcNAc...) asparagine glycosylation sites follow: asparagine 364, asparagine 368, and asparagine 376. Over residues threonine 370 to proline 380 the composition is skewed to polar residues. A disordered region spans residues threonine 370–serine 423. Low complexity-rich tracts occupy residues serine 389–serine 402 and serine 410–serine 423. Residue asparagine 430 is the site of GPI-anchor amidated asparagine attachment. Residues serine 431–leucine 453 constitute a propeptide, removed in mature form.

It belongs to the glycosyl hydrolase 17 family. The GPI-anchor is attached to the protein in the endoplasmic reticulum and serves to target the protein to the cell surface. There, the glucosamine-inositol phospholipid moiety is cleaved off and the GPI-modified mannoprotein is covalently attached via its lipidless GPI glycan remnant to the 1,6-beta-glucan of the outer cell wall layer.

The protein resides in the cell membrane. The protein localises to the secreted. It localises to the cell wall. It catalyses the reaction Hydrolysis of (1-&gt;3)-beta-D-glucosidic linkages in (1-&gt;3)-beta-D-glucans.. In terms of biological role, glucanases play a role in cell expansion during growth, in cell-cell fusion during mating, and in spore release during sporulation. This enzyme may be involved in beta-glucan degradation and also function biosynthetically as a transglycosylase. The sequence is that of Probable glucan endo-1,3-beta-glucosidase eglC (eglC) from Aspergillus clavatus (strain ATCC 1007 / CBS 513.65 / DSM 816 / NCTC 3887 / NRRL 1 / QM 1276 / 107).